The primary structure comprises 223 residues: Octanoyltransferase (223 aa).

A BPL/LPL catalytic domain is found at 31–216; it reads GQIGDTLLLL…QIGEVFALEP (186 aa). Residues 76-83, 145-147, and 159-161 each bind substrate; these read RGGEVTYH, AIG, and GLA. Residue cysteine 177 is the Acyl-thioester intermediate of the active site.

The protein belongs to the LipB family.

The protein localises to the cytoplasm. The catalysed reaction is octanoyl-[ACP] + L-lysyl-[protein] = N(6)-octanoyl-L-lysyl-[protein] + holo-[ACP] + H(+). It functions in the pathway protein modification; protein lipoylation via endogenous pathway; protein N(6)-(lipoyl)lysine from octanoyl-[acyl-carrier-protein]: step 1/2. In terms of biological role, catalyzes the transfer of endogenously produced octanoic acid from octanoyl-acyl-carrier-protein onto the lipoyl domains of lipoate-dependent enzymes. Lipoyl-ACP can also act as a substrate although octanoyl-ACP is likely to be the physiological substrate. This chain is Octanoyltransferase, found in Chloroflexus aurantiacus (strain ATCC 29366 / DSM 635 / J-10-fl).